The following is a 379-amino-acid chain: F-box protein At5g18160 (379 aa).

The tract at residues methionine 1–asparagine 26 is disordered. Over residues threonine 11–asparagine 26 the composition is skewed to polar residues. Residues isoleucine 28 to arginine 74 form the F-box domain.

The protein is F-box protein At5g18160 of Arabidopsis thaliana (Mouse-ear cress).